We begin with the raw amino-acid sequence, 82 residues long: uncharacterized protein (82 aa).

The protein belongs to the chlamydial CPn_0711/CT_665/TC_0036 family.

This is an uncharacterized protein from Chlamydia pneumoniae (Chlamydophila pneumoniae).